Consider the following 212-residue polypeptide: Ras-like protein (212 aa).

A GTP-binding site is contributed by 15-22 (GGGGVGKS). Residues 37 to 45 (YDPTIEDSY) carry the Effector region motif. Residues 62–66 (DTAGQ) and 121–124 (NKCD) contribute to the GTP site. S-palmitoyl cysteine attachment occurs at residues C205 and C206. Cysteine methyl ester is present on C209. The S-geranylgeranyl cysteine moiety is linked to residue C209. Residues 210 to 212 (IVM) constitute a propeptide, removed in mature form.

Belongs to the small GTPase superfamily. Ras family.

Its subcellular location is the cell membrane. It catalyses the reaction GTP + H2O = GDP + phosphate + H(+). Alternates between an inactive form bound to GDP and an active form bound to GTP. Activated by a guanine nucleotide-exchange factor (GEF) and inactivated by a GTPase-activating protein (GAP). This Emericella nidulans (strain FGSC A4 / ATCC 38163 / CBS 112.46 / NRRL 194 / M139) (Aspergillus nidulans) protein is Ras-like protein (rasA).